A 124-amino-acid chain; its full sequence is Large ribosomal subunit protein uL22 (124 aa).

The protein belongs to the universal ribosomal protein uL22 family. In terms of assembly, part of the 50S ribosomal subunit.

Functionally, this protein binds specifically to 23S rRNA; its binding is stimulated by other ribosomal proteins, e.g. L4, L17, and L20. It is important during the early stages of 50S assembly. It makes multiple contacts with different domains of the 23S rRNA in the assembled 50S subunit and ribosome. Its function is as follows. The globular domain of the protein is located near the polypeptide exit tunnel on the outside of the subunit, while an extended beta-hairpin is found that lines the wall of the exit tunnel in the center of the 70S ribosome. The sequence is that of Large ribosomal subunit protein uL22 from Buchnera aphidicola subsp. Cinara cedri (strain Cc).